Here is a 103-residue protein sequence, read N- to C-terminus: MAAKIRQNDEVIVLTGKDKGKRGKVTKVLPNGKVFVEGINIITKHEKPVPALGKAGGLVKKEAAIDASNVAIFNPKTNKADRVGFRFEDGKKVRFFKSNNEII.

Belongs to the universal ribosomal protein uL24 family. As to quaternary structure, part of the 50S ribosomal subunit.

Its function is as follows. One of two assembly initiator proteins, it binds directly to the 5'-end of the 23S rRNA, where it nucleates assembly of the 50S subunit. In terms of biological role, one of the proteins that surrounds the polypeptide exit tunnel on the outside of the subunit. The sequence is that of Large ribosomal subunit protein uL24 from Haemophilus influenzae (strain 86-028NP).